The following is a 1912-amino-acid chain: Receptor-type tyrosine-protein phosphatase delta (1912 aa).

Residues 1–20 (MVPVARPLSLLLTFFLCACA) form the signal peptide. Over 21–1266 (ETPPRFTRTP…PQPITDEEEG (1246 aa)) the chain is Extracellular. Ig-like C2-type domains are found at residues 24-114 (PRFT…TRLT) and 126-224 (PTID…ANLY). Intrachain disulfides connect Cys-45–Cys-98 and Cys-147–Cys-207. Residues 181 to 189 (ESIGGTPIR) are mini-exon peptide A9; sufficient for interaction with IL1RAPL1. The segment at 227 to 230 (ELRE) is mini-exon peptide B; required for interaction with SLITRK2 and in the function in pre-synaptic differentiation; Acts as an adjustable linker to control relative positions and orientations of the PTPRD second and third immunoglobilin domains for their simultaneous interactions with the first immunoglobilin domain of IL1RAPL1 and IL1RAP; Modulates affinity for IL1RAPL1 and IL1RAP. The Ig-like C2-type 3 domain occupies 236 to 318 (PRFSIPPTNH…GVIEAIAQIT (83 aa)). Residues Asn-254 and Asn-299 are each glycosylated (N-linked (GlcNAc...) asparagine). Cys-257 and Cys-302 are disulfide-bonded. 8 consecutive Fibronectin type-III domains span residues 325 to 415 (PPGT…TSEQ), 420 to 516 (APRD…TGVP), 518 to 607 (QPLN…TMQS), 612 to 709 (PPQD…TDED), 714 to 822 (PPRK…TTGA), 823 to 916 (VPGK…VPEE), 921 to 1016 (FPQN…TLPV), and 1020 to 1106 (FAKN…TAPD). N-linked (GlcNAc...) asparagine glycosylation is found at Asn-724 and Asn-832. The helical transmembrane segment at 1267–1287 (LIWVVGPVLAVVFIICIVIAI) threads the bilayer. The Cytoplasmic segment spans residues 1288–1912 (LLYKRKRAES…YLGSFDHYAT (625 aa)). Residues 1298–1319 (ESRKSSLPNSKEVPSHHPTDPV) are disordered. The span at 1310–1319 (VPSHHPTDPV) shows a compositional bias: basic and acidic residues. 2 consecutive Tyrosine-protein phosphatase domains span residues 1357-1612 (FSQE…LLEA) and 1644-1903 (MELE…ALEY). Substrate contacts are provided by residues Asp-1521, 1553–1559 (CSAGVGR), and Gln-1597. Catalysis depends on Cys-1553, which acts as the Phosphocysteine intermediate. Catalysis depends on Cys-1844, which acts as the Phosphocysteine intermediate.

This sequence belongs to the protein-tyrosine phosphatase family. Receptor class 2A subfamily. In terms of assembly, interacts with PPFIA1, PPFIA2 and PPFIA3. Interacts (via extracellular domain) with SLITRK4 (via LRR 1 and 2 repeats). Interacts with SLITRK2; induces presynaptic differentiation. Interacts (via the second immunoglobilin domain) with IL1RAPL1 (via the first immunoglobilin domain); induces pre- and postsynaptic differentiation of neurons and synapse formation. Isoform G, isoform H, isoform I, isoform J, and isoform K do not interact with IL1RAPL1. Interacts (via the third immunoglobilin domain) with IL1RAP (via the first immunoglobilin domain); induces pre- and postsynaptic differentiation of neurons. Post-translationally, a cleavage occurs, separating the extracellular domain from the transmembrane segment. This process called 'ectodomain shedding' is thought to be involved in receptor desensitization, signal transduction and/or membrane localization. As to expression, brain, kidney, heart, and some B-cell lines.

It localises to the membrane. The catalysed reaction is O-phospho-L-tyrosyl-[protein] + H2O = L-tyrosyl-[protein] + phosphate. In terms of biological role, can bidirectionally induce pre- and post-synaptic differentiation of neurons by mediating interaction with IL1RAP and IL1RAPL1 trans-synaptically. Involved in pre-synaptic differentiation through interaction with SLITRK2. This chain is Receptor-type tyrosine-protein phosphatase delta (Ptprd), found in Mus musculus (Mouse).